A 315-amino-acid chain; its full sequence is Homeobox-leucine zipper protein HAT3 (315 aa).

Residues 140–163 are disordered; it reads SCSLGGGSDDEDGSGNGDDSSRKK. The segment at residues 159-218 is a DNA-binding region (homeobox); the sequence is SSRKKLRLSKEQALVLEETFKEHSTLNPKQKMALAKQLNLRTRQVEVWFQNRRARTKLKQ. The interval 226–247 is leucine-zipper; that stretch reads LKRCCENLTDENRRLQKEVSEL. Over residues 280–305 the composition is skewed to low complexity; it reads SSSSVAPPVMNSSSPMGPMSPWAAMP. The interval 280–315 is disordered; that stretch reads SSSSVAPPVMNSSSPMGPMSPWAAMPLRQRPAAGSH.

Belongs to the HD-ZIP homeobox family. Class II subfamily.

It localises to the nucleus. Its function is as follows. Probable transcription factor. The chain is Homeobox-leucine zipper protein HAT3 (HAT3) from Arabidopsis thaliana (Mouse-ear cress).